A 372-amino-acid chain; its full sequence is E3 ubiquitin-protein ligase RNF34 (372 aa).

An FYVE-type zinc finger spans residues 56-107 (EGPNIVCKACGLSFSVFRKKHVCCDCKKDFCSVCSVLQENLRRCSTCHLLQE). Positions 115–134 (LMRLKVKDLRQYLILRNIPI) constitute an SAP 1 domain. Residue Ser-169 is modified to Phosphoserine. Residues 194-253 (QGELMDGDQTSRSGVPAQVQSEITSANTEDDDDDDDEDDDDEEENAEDRNPGLSKERVRA) form a disordered region. The segment covering 201–220 (DQTSRSGVPAQVQSEITSAN) has biased composition (polar residues). Residues 221–239 (TEDDDDDDDEDDDDEEENA) show a composition bias toward acidic residues. Over residues 240–252 (EDRNPGLSKERVR) the composition is skewed to basic and acidic residues. Ser-254 and Ser-256 each carry phosphoserine. The SAP 2 domain maps to 264 to 278 (VEGMSVRQLKEILAR). Residues 325-360 (CRICMDAVIDCVLLECGHMVTCTKCGKRMSECPICR) form an RING-type zinc finger.

In terms of assembly, interacts with CASP8 and CASP10. Interacts (via RING-type zinc finger) with PPARGC1A. Interacts with NOD1. Interacts with p53/TP53; involved in p53/TP53 ubiquitination. Interacts (via RING-type zinc finger) with MDM2; the interaction stabilizes MDM2. Autoubiquitinated (in vitro). In terms of processing, proteolytically cleaved by caspases upon induction of apoptosis by TNF. As to expression, ubiquitous. Detected in heart, brain, liver, skeletal muscle, kidney, pancreas, spleen, thymus, prostate, testis, ovary, colon and leukocytes.

The protein localises to the cell membrane. It localises to the endomembrane system. The protein resides in the nucleus. Its subcellular location is the nucleus speckle. It is found in the cytoplasm. The protein localises to the cytosol. It catalyses the reaction S-ubiquitinyl-[E2 ubiquitin-conjugating enzyme]-L-cysteine + [acceptor protein]-L-lysine = [E2 ubiquitin-conjugating enzyme]-L-cysteine + N(6)-ubiquitinyl-[acceptor protein]-L-lysine.. It functions in the pathway protein modification; protein ubiquitination. E3 ubiquitin-protein ligase that regulates several biological processes through the ubiquitin-mediated proteasomal degradation of various target proteins. Ubiquitinates the caspases CASP8 and CASP10, promoting their proteasomal degradation, to negatively regulate cell death downstream of death domain receptors in the extrinsic pathway of apoptosis. May mediate 'Lys-48'-linked polyubiquitination of RIPK1 and its subsequent proteasomal degradation thereby indirectly regulating the tumor necrosis factor-mediated signaling pathway. Negatively regulates p53/TP53 through its direct ubiquitination and targeting to proteasomal degradation. Indirectly, may also negatively regulate p53/TP53 through ubiquitination and degradation of SFN. Mediates PPARGC1A proteasomal degradation probably through ubiquitination thereby indirectly regulating the metabolism of brown fat cells. Possibly involved in innate immunity, through 'Lys-48'-linked polyubiquitination of NOD1 and its subsequent proteasomal degradation. This chain is E3 ubiquitin-protein ligase RNF34, found in Homo sapiens (Human).